A 237-amino-acid chain; its full sequence is uncharacterized protein (237 aa).

This is an uncharacterized protein from Methanocaldococcus jannaschii (strain ATCC 43067 / DSM 2661 / JAL-1 / JCM 10045 / NBRC 100440) (Methanococcus jannaschii).